A 390-amino-acid polypeptide reads, in one-letter code: Cell adhesion molecule 4 (390 aa).

The first 27 residues, 1–27, serve as a signal peptide directing secretion; the sequence is MAPALTALNRCFVLGILLLVTAGTAFS. In terms of domain architecture, Ig-like V-type spans 28-122; that stretch reads QEVQAENVTV…DTHHQIATLT (95 aa). Over 28-326 the chain is Extracellular; it reads QEVQAENVTV…IEAQTQVPYA (299 aa). N-linked (GlcNAc...) asparagine glycosylation is found at N34 and N70. Disulfide bonds link C47-C107, C148-C202, and C247-C293. 2 consecutive Ig-like C2-type domains span residues 127–219 and 226–309; these read PDNP…TQYE and PTAS…YVLV. N264 and N288 each carry an N-linked (GlcNAc...) asparagine glycan. The helical transmembrane segment at 327–347 threads the bilayer; sequence VIGGILALLVFLVICILIVMV. At 348-390 the chain is on the cytoplasmic side; the sequence is WCSVRQKGSYLTHEASGLDEHGEAREAFLNGGENHKRKEEFFI.

This sequence belongs to the nectin family.

It localises to the membrane. In terms of biological role, involved in the cell-cell adhesion. This chain is Cell adhesion molecule 4 (cadm4), found in Xenopus laevis (African clawed frog).